A 170-amino-acid chain; its full sequence is Small ribosomal subunit protein uS5 (170 aa).

An S5 DRBM domain is found at 12–75 (LSELLVSVRR…NAAKKSMIRV (64 aa)).

It belongs to the universal ribosomal protein uS5 family. As to quaternary structure, part of the 30S ribosomal subunit. Contacts proteins S4 and S8.

Its function is as follows. With S4 and S12 plays an important role in translational accuracy. In terms of biological role, located at the back of the 30S subunit body where it stabilizes the conformation of the head with respect to the body. The polypeptide is Small ribosomal subunit protein uS5 (Wolbachia pipientis wMel).